Here is a 272-residue protein sequence, read N- to C-terminus: GTP cyclohydrolase FolE2 (272 aa).

This sequence belongs to the GTP cyclohydrolase IV family.

The enzyme catalyses GTP + H2O = 7,8-dihydroneopterin 3'-triphosphate + formate + H(+). It participates in cofactor biosynthesis; 7,8-dihydroneopterin triphosphate biosynthesis; 7,8-dihydroneopterin triphosphate from GTP: step 1/1. Functionally, converts GTP to 7,8-dihydroneopterin triphosphate. The polypeptide is GTP cyclohydrolase FolE2 (Polynucleobacter asymbioticus (strain DSM 18221 / CIP 109841 / QLW-P1DMWA-1) (Polynucleobacter necessarius subsp. asymbioticus)).